A 307-amino-acid polypeptide reads, in one-letter code: Elongation factor Ts (307 aa).

The segment at 79-82 is involved in Mg(2+) ion dislocation from EF-Tu; sequence TDFV.

This sequence belongs to the EF-Ts family.

It is found in the cytoplasm. Associates with the EF-Tu.GDP complex and induces the exchange of GDP to GTP. It remains bound to the aminoacyl-tRNA.EF-Tu.GTP complex up to the GTP hydrolysis stage on the ribosome. In Bartonella tribocorum (strain CIP 105476 / IBS 506), this protein is Elongation factor Ts.